The primary structure comprises 972 residues: FHF complex subunit HOOK-interacting protein 1B (972 aa).

Disordered stretches follow at residues 465–548 (APSP…GELE) and 573–644 (SAPY…SWPE). Ser-467 carries the post-translational modification Phosphoserine. The span at 478-501 (RGPGSPSVDSSSVTTVPRPSTPSR) shows a compositional bias: low complexity. Phosphoserine occurs at positions 510, 523, 529, and 533. Residues 523-535 (SPGLSASPASSPG) are compositionally biased toward low complexity. A phosphoserine mark is found at Ser-859 and Ser-897.

This sequence belongs to the FHIP family. Component of the FTS/Hook/FHIP complex (FHF complex), composed of AKTIP/FTS, FHIP1B, and one or more members of the Hook family of proteins HOOK1, HOOK2, and HOOK3. The FHF complex associates with the homotypic vesicular sorting complex (the HOPS complex).

Functionally, component of the FTS/Hook/FHIP complex (FHF complex). The FHF complex may function to promote vesicle trafficking and/or fusion via the homotypic vesicular protein sorting complex (the HOPS complex). FHF complex promotes the distribution of AP-4 complex to the perinuclear area of the cell. This Homo sapiens (Human) protein is FHF complex subunit HOOK-interacting protein 1B.